Reading from the N-terminus, the 153-residue chain is Ribosomal RNA large subunit methyltransferase H (153 aa).

The S-adenosyl-L-methionine site is built by Leu71 and Gly102.

The protein belongs to the RNA methyltransferase RlmH family. As to quaternary structure, homodimer.

It localises to the cytoplasm. The enzyme catalyses pseudouridine(1915) in 23S rRNA + S-adenosyl-L-methionine = N(3)-methylpseudouridine(1915) in 23S rRNA + S-adenosyl-L-homocysteine + H(+). Its function is as follows. Specifically methylates the pseudouridine at position 1915 (m3Psi1915) in 23S rRNA. The chain is Ribosomal RNA large subunit methyltransferase H from Anaeromyxobacter dehalogenans (strain 2CP-1 / ATCC BAA-258).